Here is a 284-residue protein sequence, read N- to C-terminus: Pantothenate synthetase (284 aa).

An ATP-binding site is contributed by 30–37 (MGNLHEGH). Catalysis depends on histidine 37, which acts as the Proton donor. Glutamine 61 contacts (R)-pantoate. Glutamine 61 is a binding site for beta-alanine. 149-152 (GEKD) lines the ATP pocket. Glutamine 155 serves as a coordination point for (R)-pantoate. ATP is bound by residues valine 178 and 186 to 189 (LSSR).

It belongs to the pantothenate synthetase family. In terms of assembly, homodimer.

The protein localises to the cytoplasm. The enzyme catalyses (R)-pantoate + beta-alanine + ATP = (R)-pantothenate + AMP + diphosphate + H(+). It functions in the pathway cofactor biosynthesis; (R)-pantothenate biosynthesis; (R)-pantothenate from (R)-pantoate and beta-alanine: step 1/1. Functionally, catalyzes the condensation of pantoate with beta-alanine in an ATP-dependent reaction via a pantoyl-adenylate intermediate. The chain is Pantothenate synthetase from Yersinia pestis bv. Antiqua (strain Antiqua).